A 597-amino-acid chain; its full sequence is uncharacterized protein (597 aa).

Helical transmembrane passes span 37-57 (VLII…LWPV), 67-87 (IFWL…LQFA), 109-129 (GGER…YAAI), 134-154 (SVSL…FIAW), and 162-182 (ALMT…LAIV). The Histidine kinase domain occupies 393 to 597 (HQLARDLHDG…QITIFVPIES (205 aa)).

It is found in the cell membrane. This is an uncharacterized protein from Chloroflexus aurantiacus (strain ATCC 29366 / DSM 635 / J-10-fl).